Consider the following 216-residue polypeptide: Pyrophosphatase PpaX (216 aa).

Asp-9 acts as the Nucleophile in catalysis.

The protein belongs to the HAD-like hydrolase superfamily. PpaX family. Requires Mg(2+) as cofactor.

It catalyses the reaction diphosphate + H2O = 2 phosphate + H(+). Functionally, hydrolyzes pyrophosphate formed during P-Ser-HPr dephosphorylation by HPrK/P. Might play a role in controlling the intracellular pyrophosphate pool. The chain is Pyrophosphatase PpaX from Bacillus cereus (strain B4264).